A 178-amino-acid chain; its full sequence is Large ribosomal subunit protein uL6 (178 aa).

Belongs to the universal ribosomal protein uL6 family. As to quaternary structure, part of the 50S ribosomal subunit.

This protein binds to the 23S rRNA, and is important in its secondary structure. It is located near the subunit interface in the base of the L7/L12 stalk, and near the tRNA binding site of the peptidyltransferase center. This chain is Large ribosomal subunit protein uL6, found in Campylobacter concisus (strain 13826).